Reading from the N-terminus, the 1848-residue chain is Unconventional myosin-Vb (1848 aa).

Methionine 1 carries the post-translational modification N-acetylmethionine. The Myosin N-terminal SH3-like domain occupies 8 to 60; that stretch reads SQCTRVWIPDPDEVWRSAELTKDYKEGDKSLQLRLEDETILEYPIDVQRNQLP. Residues 21–40 are requires for interaction with LIMA1; sequence VWRSAELTKDYKEGDKSLQL. The Myosin motor domain maps to 69-761; the sequence is VGENDLTALS…QVAYLEKLRA (693 aa). 163–170 is a binding site for ATP; the sequence is GESGAGKT. Positions 596 to 630 are disordered; the sequence is KDPVPATTPGKGSSSKISVRSARPPMKVSNKEHKK. Residues 640–662 form an actin-binding region; it reads LHLLMETLNATTPHYVRCIKPND. IQ domains follow at residues 769 to 798, 792 to 821, 817 to 848, 840 to 869, 865 to 896, and 888 to 917; these read IMIQ…QRYC, LTLQ…VLQK, VVLQ…FTRA, VVIQ…TIQK, TTIQ…AFRM, and IVIQ…EHLK. Coiled coils occupy residues 899–1266 and 1341–1471; these read ARRE…ILRT and RLLE…GMLE. Disordered regions lie at residues 1093–1123 and 1166–1192; these read QTPG…EIGD and QLEK…LDPN. Positions 1101 to 1121 are enriched in polar residues; sequence PSNQSSLESDSNYPSISTSEI. The span at 1166–1179 shows a compositional bias: basic and acidic residues; the sequence is QLEKREQQDSKKVQ. A Phosphoserine modification is found at serine 1446. The 278-residue stretch at 1526–1803 folds into the Dilute domain; the sequence is TSTINGIKKV…IRTIQAQLQE (278 aa).

This sequence belongs to the TRAFAC class myosin-kinesin ATPase superfamily. Myosin family. In terms of assembly, component of the CART complex, at least composed of ACTN4, HGS/HRS, MYO5B and TRIM3. Interacts with RAB11FIP2, RAB11A, and RAB8A. Found in a complex with CFTR and RAB11A. Interacts with NPC1L1;. Interacts with LIMA1.

The protein localises to the cytoplasm. In terms of biological role, may be involved in vesicular trafficking via its association with the CART complex. The CART complex is necessary for efficient transferrin receptor recycling but not for EGFR degradation. Required in a complex with RAB11A and RAB11FIP2 for the transport of NPC1L1 to the plasma membrane. Together with RAB11A participates in CFTR trafficking to the plasma membrane and TF (transferrin) recycling in nonpolarized cells. Together with RAB11A and RAB8A participates in epithelial cell polarization. Together with RAB25 regulates transcytosis. Required for proper localization of bile salt export pump ABCB11 at the apical/canalicular plasma membrane of hepatocytes. This chain is Unconventional myosin-Vb (MYO5B), found in Homo sapiens (Human).